Consider the following 166-residue polypeptide: Small ribosomal subunit protein uS5 (166 aa).

Positions 11–74 (LIEKLITVNR…EKARRNMVTV (64 aa)) constitute an S5 DRBM domain.

This sequence belongs to the universal ribosomal protein uS5 family. In terms of assembly, part of the 30S ribosomal subunit. Contacts proteins S4 and S8.

In terms of biological role, with S4 and S12 plays an important role in translational accuracy. Located at the back of the 30S subunit body where it stabilizes the conformation of the head with respect to the body. The polypeptide is Small ribosomal subunit protein uS5 (Idiomarina loihiensis (strain ATCC BAA-735 / DSM 15497 / L2-TR)).